Reading from the N-terminus, the 249-residue chain is 2,3-bisphosphoglycerate-dependent phosphoglycerate mutase (249 aa).

Residues 9 to 16 (RHGQSQWN), 22 to 23 (TG), Arg-61, 88 to 91 (ERHY), Lys-99, 115 to 116 (RR), and 184 to 185 (GN) each bind substrate. The active-site Tele-phosphohistidine intermediate is His-10. Glu-88 acts as the Proton donor/acceptor in catalysis.

Belongs to the phosphoglycerate mutase family. BPG-dependent PGAM subfamily. In terms of assembly, homodimer.

It catalyses the reaction (2R)-2-phosphoglycerate = (2R)-3-phosphoglycerate. The protein operates within carbohydrate degradation; glycolysis; pyruvate from D-glyceraldehyde 3-phosphate: step 3/5. Functionally, catalyzes the interconversion of 2-phosphoglycerate and 3-phosphoglycerate. In Xanthomonas campestris pv. campestris (strain 8004), this protein is 2,3-bisphosphoglycerate-dependent phosphoglycerate mutase.